The following is a 394-amino-acid chain: Protein NDRG1 (394 aa).

N-acetylserine is present on S2. Residues S2, S319, and S326 each carry the phosphoserine modification. The tract at residues 325 to 394 is disordered; sequence RSRTASGSSV…AGPKSMEVSC (70 aa). A compositionally biased stretch (polar residues) spans 327 to 339; that stretch reads RTASGSSVTSLEG. T328 bears the Phosphothreonine mark. At S330 the chain carries Phosphoserine; by SGK1. Phosphoserine is present on residues S332 and S333. Phosphothreonine is present on T335. S336 carries the post-translational modification Phosphoserine. 3 repeat units span residues 339 to 348, 349 to 358, and 359 to 368. The segment at 339–368 is 3 X 10 AA tandem repeats of G-[PST]-R-S-R-S-H-T-S-E; the sequence is GTRSRSHTSEGPRSRSHTSEGSRSRSHTSE. Phosphothreonine is present on T340. S342 is modified (phosphoserine). Over residues 345 to 371 the composition is skewed to basic and acidic residues; it reads HTSEGPRSRSHTSEGSRSRSHTSEDAR. T346 is subject to Phosphothreonine; by SGK1. A Phosphoserine modification is found at S352. T356 bears the Phosphothreonine; by SGK1 mark. Phosphoserine is present on residues S362 and S364. At T366 the chain carries Phosphothreonine; by SGK1. The span at 374 to 386 shows a compositional bias: polar residues; that stretch reads ITPNSGATGNNAG. T375 bears the Phosphothreonine mark.

This sequence belongs to the NDRG family. In terms of assembly, interacts with RAB4A (membrane-bound form); the interaction involves NDRG1 in vesicular recycling of CDH1. Interacts with APOA1, APOA2, PRA1 and RTN1. Post-translationally, under stress conditions, phosphorylated in the C-terminal on many serine and threonine residues. Phosphorylated in vitro by PKA. Phosphorylation enhanced by increased intracellular cAMP levels. Homocysteine induces dephosphorylation. Phosphorylation by SGK1 is cell cycle dependent. As to expression, widely expressed, with highest levels in kidney followed by brain, pancreas, small intestine, colon and spleen (at protein level). Also detected in heart and preputial gland, and in much smaller quantities in other tissues. Not detected in duodenum and prostate. Highly expressed in Schwann cells.

The protein resides in the cytoplasm. It is found in the cytosol. It localises to the cytoskeleton. The protein localises to the microtubule organizing center. Its subcellular location is the centrosome. The protein resides in the nucleus. It is found in the cell membrane. Its function is as follows. Stress-responsive protein involved in hormone responses, cell growth, and differentiation. Acts as a tumor suppressor in many cell types. Necessary but not sufficient for p53/TP53-mediated caspase activation and apoptosis. Required for vesicular recycling of CDH1 and TF. May also function in lipid trafficking. Protects cells from spindle disruption damage. Functions in p53/TP53-dependent mitotic spindle checkpoint. Regulates microtubule dynamics and maintains euploidy. Has a role in cell trafficking notably of the Schwann cell and is necessary for the maintenance and development of the peripheral nerve myelin sheath. This is Protein NDRG1 (Ndrg1) from Mus musculus (Mouse).